Reading from the N-terminus, the 466-residue chain is Ribulose bisphosphate carboxylase large chain (466 aa).

Residue Lys4 is modified to N6,N6,N6-trimethyllysine. Residues Asn113 and Thr163 each coordinate substrate. Residue Lys165 is the Proton acceptor of the active site. Residue Lys167 coordinates substrate. Mg(2+)-binding residues include Lys191, Asp193, and Glu194. An N6-carboxylysine modification is found at Lys191. His284 functions as the Proton acceptor in the catalytic mechanism. Substrate-binding residues include Arg285, His317, and Ser369.

Belongs to the RuBisCO large chain family. Type I subfamily. Heterohexadecamer of 8 large chains and 8 small chains; disulfide-linked. The disulfide link is formed within the large subunit homodimers. Requires Mg(2+) as cofactor. Post-translationally, the disulfide bond which can form in the large chain dimeric partners within the hexadecamer appears to be associated with oxidative stress and protein turnover.

It is found in the plastid. Its subcellular location is the chloroplast. It carries out the reaction 2 (2R)-3-phosphoglycerate + 2 H(+) = D-ribulose 1,5-bisphosphate + CO2 + H2O. The enzyme catalyses D-ribulose 1,5-bisphosphate + O2 = 2-phosphoglycolate + (2R)-3-phosphoglycerate + 2 H(+). RuBisCO catalyzes two reactions: the carboxylation of D-ribulose 1,5-bisphosphate, the primary event in carbon dioxide fixation, as well as the oxidative fragmentation of the pentose substrate in the photorespiration process. Both reactions occur simultaneously and in competition at the same active site. The chain is Ribulose bisphosphate carboxylase large chain from Ruttya fruticosa (African azalea).